Here is a 393-residue protein sequence, read N- to C-terminus: MHFTRTLFNQVASKASRQLPVQKRVQMAYDLHIPNKTVNPNLNIRSHEPIVFVHGIFGSKKNYRFDCQKIANVTHTPVYTVDLRNHGQSIHALPFDYETLAQDVADFCEDHGLKKVNLIGYSLGAKICMLTMLQNPDLIRSGVIIDNSPIEQPHIEIFLQMFVKSMIHVLNSTKIEANDSDWKRKADDAMKRYIPDGGIRKYLLANLINKVPKGYKSPVIDYDDGFIHFQNPVKHMTEVAVKNVSAWPTEKVAGKTFEGPIRFIKGTKSAFIDDAGKKAIAGYFPNHSISEINATHFILNERPLEYVRVICDFIKTERFRSLQEHLRNVEHFSPSEIEAKQAAKHAQQIEELRKVTSTSESSIPHSTQSSEQAFTENIDLARQEREHQKSVSA.

Residues 1–25 (MHFTRTLFNQVASKASRQLPVQKRV) constitute a mitochondrion transit peptide. The 103-residue stretch at 49–151 (PIVFVHGIFG…GVIIDNSPIE (103 aa)) folds into the AB hydrolase-1 domain. Catalysis depends on charge relay system residues serine 122, aspartate 146, and histidine 296. The span at 343–354 (AKHAQQIEELRK) shows a compositional bias: basic and acidic residues. A disordered region spans residues 343–393 (AKHAQQIEELRKVTSTSESSIPHSTQSSEQAFTENIDLARQEREHQKSVSA). Positions 355 to 375 (VTSTSESSIPHSTQSSEQAFT) are enriched in polar residues. A compositionally biased stretch (basic and acidic residues) spans 379-393 (DLARQEREHQKSVSA).

Belongs to the AB hydrolase superfamily.

It localises to the mitochondrion. The enzyme catalyses ethanol + acetyl-CoA = ethyl acetate + CoA. The catalysed reaction is acetyl-CoA + H2O = acetate + CoA + H(+). It catalyses the reaction ethyl acetate + H2O = ethanol + acetate + H(+). Alcohol acetyltransferase that catalyzes the synthesis of ethyl acetate from ethanol and acetyl-CoA. Can also function as a thioesterase by hydrolyzing acetyl-CoA in the absence of ethanol, as well as esterase hydrolyzing ethyl acetate. In Wickerhamomyces ciferrii (strain ATCC 14091 / BCRC 22168 / CBS 111 / JCM 3599 / NBRC 0793 / NRRL Y-1031 F-60-10) (Yeast), this protein is Ethanol acetyltransferase 1 (EAT1).